Consider the following 254-residue polypeptide: uncharacterized protein (254 aa).

Ile18, Ser37, Asp63, Asn90, Tyr159, Lys163, Val192, and Thr194 together coordinate NADP(+). Tyr159 acts as the Proton donor in catalysis. Residue Lys163 is the Lowers pKa of active site Tyr of the active site.

It belongs to the short-chain dehydrogenases/reductases (SDR) family.

Its subcellular location is the cytoplasm. The protein resides in the nucleus. This is an uncharacterized protein from Schizosaccharomyces pombe (strain 972 / ATCC 24843) (Fission yeast).